We begin with the raw amino-acid sequence, 507 residues long: ATP synthase subunit alpha, chloroplastic (507 aa).

Residue 170-177 participates in ATP binding; the sequence is GDRQTGKT.

The protein belongs to the ATPase alpha/beta chains family. In terms of assembly, F-type ATPases have 2 components, CF(1) - the catalytic core - and CF(0) - the membrane proton channel. CF(1) has five subunits: alpha(3), beta(3), gamma(1), delta(1), epsilon(1). CF(0) has four main subunits: a, b, b' and c.

The protein resides in the plastid. It localises to the chloroplast thylakoid membrane. It catalyses the reaction ATP + H2O + 4 H(+)(in) = ADP + phosphate + 5 H(+)(out). Its function is as follows. Produces ATP from ADP in the presence of a proton gradient across the membrane. The alpha chain is a regulatory subunit. The polypeptide is ATP synthase subunit alpha, chloroplastic (Nandina domestica (Heavenly bamboo)).